The sequence spans 170 residues: Neurotensin/neuromedin N (170 aa).

Positions 1–23 (MMAGMKIQLVCMILLAFSSWSLC) are cleaved as a signal peptide.

It belongs to the neurotensin family. Interacts with NTSR1. Interacts with SORT1. Interacts with SORL1. In terms of processing, neurotensin is cleaved and degraded by Angiotensin-converting enzyme (ACE) and neprilysin (MME). In terms of tissue distribution, brain and gut.

The protein resides in the secreted. The protein localises to the cytoplasmic vesicle. It localises to the secretory vesicle. Neurotensin may play an endocrine or paracrine role in the regulation of fat metabolism. It causes contraction of smooth muscle. The protein is Neurotensin/neuromedin N (NTS) of Bos taurus (Bovine).